Here is a 610-residue protein sequence, read N- to C-terminus: MPMYRSRTSTHGRNMAGARGLWRATGMTDGDFGKPIIAIVNSFTQFVPGHVHLKDLGQMVAREVEAAGGVAKEFNTIAVDDGIAMGHDGMLYSLPSREVIADSVEYMVNAHCADAMVCISNCDKITPGMLMAAMRLNIPAIFVSGGPMEAGKIDIADLEMTKIDLVDAMVAAANDKFTDEQVQHIEENACPTCGSCSGMFTANSMNCLAEALGLALPGNGSTLATHSDRKALFLEAGRRIVEITKRHYEGEEKGLLPREIATFEAFENAMSLDIAMGGSTNTVLHLLAIAHEGEVDFTMTDMDRLSRKVPCLCKVAPNTANVHMEDVHRAGGIFSILGELSRAGLLHDDCGTVHSASMGEAIAKWDIKVANNPEAESLFKAAPGGVRTTQAFSQSNRYKDLDTDREGGVIRSKEHAFSQDGGLAVLFGNIAEDGCIVKTAGVDASILQFTGTAHVCESQDDAVNNILTGKVKEGDVVVIRYEGPRGGPGMQEMLYPTSYLKSKGLGKACALLTDGRFSGGTSGLSIGHVSPEAAEGGTIGLVEDGDRIEIDIPNRRIHLAVSDEVLAARRAAQEAKGWHPAKPRKRKVSTALKAYAKLTTSAAKGAVRQV.

Residue D81 participates in Mg(2+) binding. C122 provides a ligand contact to [2Fe-2S] cluster. The Mg(2+) site is built by D123 and K124. K124 is modified (N6-carboxylysine). C196 provides a ligand contact to [2Fe-2S] cluster. Residue E492 coordinates Mg(2+). S518 acts as the Proton acceptor in catalysis.

Belongs to the IlvD/Edd family. As to quaternary structure, homodimer. [2Fe-2S] cluster serves as cofactor. The cofactor is Mg(2+).

It catalyses the reaction (2R)-2,3-dihydroxy-3-methylbutanoate = 3-methyl-2-oxobutanoate + H2O. It carries out the reaction (2R,3R)-2,3-dihydroxy-3-methylpentanoate = (S)-3-methyl-2-oxopentanoate + H2O. The protein operates within amino-acid biosynthesis; L-isoleucine biosynthesis; L-isoleucine from 2-oxobutanoate: step 3/4. Its pathway is amino-acid biosynthesis; L-valine biosynthesis; L-valine from pyruvate: step 3/4. In terms of biological role, functions in the biosynthesis of branched-chain amino acids. Catalyzes the dehydration of (2R,3R)-2,3-dihydroxy-3-methylpentanoate (2,3-dihydroxy-3-methylvalerate) into 2-oxo-3-methylpentanoate (2-oxo-3-methylvalerate) and of (2R)-2,3-dihydroxy-3-methylbutanoate (2,3-dihydroxyisovalerate) into 2-oxo-3-methylbutanoate (2-oxoisovalerate), the penultimate precursor to L-isoleucine and L-valine, respectively. In Ruegeria pomeroyi (strain ATCC 700808 / DSM 15171 / DSS-3) (Silicibacter pomeroyi), this protein is Dihydroxy-acid dehydratase.